A 179-amino-acid polypeptide reads, in one-letter code: Large ribosomal subunit protein uL5 (179 aa).

It belongs to the universal ribosomal protein uL5 family. Part of the 50S ribosomal subunit; part of the 5S rRNA/L5/L18/L25 subcomplex. Contacts the 5S rRNA and the P site tRNA. Forms a bridge to the 30S subunit in the 70S ribosome.

Its function is as follows. This is one of the proteins that bind and probably mediate the attachment of the 5S RNA into the large ribosomal subunit, where it forms part of the central protuberance. In the 70S ribosome it contacts protein S13 of the 30S subunit (bridge B1b), connecting the 2 subunits; this bridge is implicated in subunit movement. Contacts the P site tRNA; the 5S rRNA and some of its associated proteins might help stabilize positioning of ribosome-bound tRNAs. The chain is Large ribosomal subunit protein uL5 from Alkalilimnicola ehrlichii (strain ATCC BAA-1101 / DSM 17681 / MLHE-1).